The sequence spans 472 residues: Ribosomal protein uS12 methylthiotransferase RimO (472 aa).

An MTTase N-terminal domain is found at 33 to 143 (NRIGFVSLGC…VLKHVHKYVP (111 aa)). 6 residues coordinate [4Fe-4S] cluster: C42, C78, C107, C175, C179, and C182. The Radical SAM core domain maps to 161 to 398 (LTPKHYAYLK…MEVQAEISAE (238 aa)). In terms of domain architecture, TRAM spans 401 to 467 (ARFVGRTLDI…EHDLWAEVVD (67 aa)).

This sequence belongs to the methylthiotransferase family. RimO subfamily. [4Fe-4S] cluster serves as cofactor.

It is found in the cytoplasm. It catalyses the reaction L-aspartate(89)-[ribosomal protein uS12]-hydrogen + (sulfur carrier)-SH + AH2 + 2 S-adenosyl-L-methionine = 3-methylsulfanyl-L-aspartate(89)-[ribosomal protein uS12]-hydrogen + (sulfur carrier)-H + 5'-deoxyadenosine + L-methionine + A + S-adenosyl-L-homocysteine + 2 H(+). Functionally, catalyzes the methylthiolation of an aspartic acid residue of ribosomal protein uS12. This chain is Ribosomal protein uS12 methylthiotransferase RimO, found in Shewanella baltica (strain OS185).